The chain runs to 847 residues: Ras GTPase-activating protein 2 (847 aa).

The span at 1–18 shows a compositional bias: low complexity; the sequence is MAAAAPAAAALTEAPAVP. Residues 1-31 are disordered; the sequence is MAAAAPAAAALTEAPAVPGTAEPETGDEDSR. Residue Ala-2 is modified to N-acetylalanine. C2 domains follow at residues 19–137 and 148–288; these read GTAE…ETWF and VQGK…QAWY. One can recognise a Ras-GAP domain in the interval 371-588; it reads NKLVPFITAV…TDVKKFLDEI (218 aa). Residue Ser-554 is modified to Phosphoserine. Positions 603–704 constitute a PH domain; it reads VHLKEGEMYK…WIDMLCRVSR (102 aa). The Btk-type zinc finger occupies 706–742; sequence NHNRLSSFHPSAYLNGNWLCCQETSEGTPGCKPCTAG. Zn(2+) is bound by residues His-714, Cys-725, Cys-726, and Cys-736. Positions 819–847 are disordered; sequence DEPHEKYRKKRSSSAKYGSKENPIVGKIS.

As to expression, widely expressed. Higher expression in brain, placenta, and kidney.

Its subcellular location is the cell membrane. In terms of biological role, inhibitory regulator of the Ras-cyclic AMP pathway. May bind inositol tetrakisphosphate (IP4) and phospholipids. This Rattus norvegicus (Rat) protein is Ras GTPase-activating protein 2 (Rasa2).